The chain runs to 496 residues: Acyltransferase clz6 (496 aa).

The active-site Proton acceptor is His163.

It belongs to the plant acyltransferase family. Monomer.

Its pathway is secondary metabolite biosynthesis. Its function is as follows. Acyltransferase; part of the gene cluster that mediates the biosynthesis of squalestatin S1 (SQS1, also known as zaragozic acid A), a heavily oxidized fungal polyketide that offers potent cholesterol lowering activity by targeting squalene synthase (SS). SQS1 is composed of a 2,8-dioxobicyclic[3.2.1]octane-3,4,5-tricarboxyclic acid core that is connected to two lipophilic polyketide arms. These initial steps feature the priming of an unusual benzoic acid starter unit onto the highly reducing polyketide synthase clz14, followed by oxaloacetate extension and product release to generate a tricarboxylic acid containing product. The phenylalanine ammonia lyase (PAL) clz10 and the acyl-CoA ligase clz12 are involved in transforming phenylalanine into benzoyl-CoA. The citrate synthase-like protein clz17 is involved in connecting the C-alpha-carbons of the hexaketide chain and oxaloacetate to afford the tricarboxylic acid unit. The potential hydrolytic enzymes, clz11 and clz13, are in close proximity to pks2 and may participate in product release. On the other side, the tetraketide arm is synthesized by a the squalestatin tetraketide synthase clz2 and enzymatically esterified to the core in the last biosynthetic step, by the acetyltransferase clz6. The biosynthesis of the tetraketide must involve 3 rounds of chain extension. After the first and second rounds methyl-transfer occurs, and in all rounds of extension the ketoreductase and dehydratase are active. The enoyl reductase and C-MeT of clz2 are not active in the final round of extension. The acetyltransferase clz6 appears to have a broad substrate selectivity for its acyl CoA substrate, allowing the in vitro synthesis of novel squalestatins. The biosynthesis of SQS1 requires several oxidative steps likely performed by oxidoreductases clz3, clz15 and clz16. Finally, in support of the identification of the cluster as being responsible for SQS1 production, the cluster contains a gene encoding a putative squalene synthase (SS) clz20, suggesting a likely mechanism for self-resistance. In Cochliobolus lunatus (Filamentous fungus), this protein is Acyltransferase clz6.